The following is a 396-amino-acid chain: Ribosomal RNA large subunit methyltransferase I (396 aa).

In terms of domain architecture, PUA spans 2–81 (SVRLVLAKGR…ESIDIAFFSR (80 aa)).

The protein belongs to the methyltransferase superfamily. RlmI family.

It is found in the cytoplasm. The catalysed reaction is cytidine(1962) in 23S rRNA + S-adenosyl-L-methionine = 5-methylcytidine(1962) in 23S rRNA + S-adenosyl-L-homocysteine + H(+). Its function is as follows. Specifically methylates the cytosine at position 1962 (m5C1962) of 23S rRNA. The protein is Ribosomal RNA large subunit methyltransferase I of Escherichia coli O157:H7.